A 162-amino-acid chain; its full sequence is Large ribosomal subunit protein uL30 (162 aa).

This sequence belongs to the universal ribosomal protein uL30 family. Part of the 50S ribosomal subunit.

The sequence is that of Large ribosomal subunit protein uL30 from Staphylothermus marinus (strain ATCC 43588 / DSM 3639 / JCM 9404 / F1).